A 208-amino-acid chain; its full sequence is Outer-membrane lipoprotein carrier protein (208 aa).

The first 22 residues, 1–22 (MLKPLSQLVCALPLVVAASSYA), serve as a signal peptide directing secretion.

Belongs to the LolA family. Monomer.

The protein resides in the periplasm. Functionally, participates in the translocation of lipoproteins from the inner membrane to the outer membrane. Only forms a complex with a lipoprotein if the residue after the N-terminal Cys is not an aspartate (The Asp acts as a targeting signal to indicate that the lipoprotein should stay in the inner membrane). This is Outer-membrane lipoprotein carrier protein from Shewanella loihica (strain ATCC BAA-1088 / PV-4).